Consider the following 202-residue polypeptide: 3-isopropylmalate dehydratase small subunit (202 aa).

It belongs to the LeuD family. LeuD type 1 subfamily. As to quaternary structure, heterodimer of LeuC and LeuD.

It carries out the reaction (2R,3S)-3-isopropylmalate = (2S)-2-isopropylmalate. It functions in the pathway amino-acid biosynthesis; L-leucine biosynthesis; L-leucine from 3-methyl-2-oxobutanoate: step 2/4. Catalyzes the isomerization between 2-isopropylmalate and 3-isopropylmalate, via the formation of 2-isopropylmaleate. The polypeptide is 3-isopropylmalate dehydratase small subunit (Paenarthrobacter aurescens (strain TC1)).